Here is a 77-residue protein sequence, read N- to C-terminus: Putative sulfur carrier protein AF_0188 (77 aa).

Catalysis depends on cysteine 11, which acts as the Cysteine persulfide intermediate.

This sequence belongs to the sulfur carrier protein TusA family.

This is Putative sulfur carrier protein AF_0188 from Archaeoglobus fulgidus (strain ATCC 49558 / DSM 4304 / JCM 9628 / NBRC 100126 / VC-16).